The following is a 543-amino-acid chain: Headcase protein homolog (543 aa).

2 disordered regions span residues 1 to 26 (MPNPKNSKGGRKNKRANSSGDEQENG) and 197 to 283 (MQDE…LSPA). 2 stretches are compositionally biased toward basic and acidic residues: residues 197-211 (MQDEKKKKSGSEKNT) and 235-250 (PSHDLPRRHSMDRQNS). S264 and S268 each carry phosphoserine.

Expressed in all tissues examined. Highest levels are in the spleen, thymus, peripheral blood and heart. Lowest in the kidney and pancreas.

May play an important role in some human cancers. May be part of the regulatory mechanism in the development of epithelial tube networks such as the circulatory system and lungs. In Homo sapiens (Human), this protein is Headcase protein homolog (HECA).